The following is a 120-amino-acid chain: Large ribosomal subunit protein uL18 (120 aa).

This sequence belongs to the universal ribosomal protein uL18 family. Part of the 50S ribosomal subunit; part of the 5S rRNA/L5/L18/L25 subcomplex. Contacts the 5S and 23S rRNAs.

This is one of the proteins that bind and probably mediate the attachment of the 5S RNA into the large ribosomal subunit, where it forms part of the central protuberance. This Azorhizobium caulinodans (strain ATCC 43989 / DSM 5975 / JCM 20966 / LMG 6465 / NBRC 14845 / NCIMB 13405 / ORS 571) protein is Large ribosomal subunit protein uL18.